Here is a 391-residue protein sequence, read N- to C-terminus: S-adenosylmethionine synthase (391 aa).

Residue histidine 14 participates in ATP binding. Aspartate 16 contributes to the Mg(2+) binding site. Glutamate 42 provides a ligand contact to K(+). 2 residues coordinate L-methionine: glutamate 55 and glutamine 98. Residues 98 to 108 are flexible loop; the sequence is QSVDIAMGVDE. ATP contacts are provided by residues 172–174, 238–239, aspartate 247, 253–254, alanine 270, and lysine 274; these read DGK, RF, and RK. Aspartate 247 lines the L-methionine pocket. An L-methionine-binding site is contributed by lysine 278.

Belongs to the AdoMet synthase family. Homotetramer; dimer of dimers. The cofactor is Mg(2+). Requires K(+) as cofactor.

Its subcellular location is the cytoplasm. It carries out the reaction L-methionine + ATP + H2O = S-adenosyl-L-methionine + phosphate + diphosphate. The protein operates within amino-acid biosynthesis; S-adenosyl-L-methionine biosynthesis; S-adenosyl-L-methionine from L-methionine: step 1/1. Functionally, catalyzes the formation of S-adenosylmethionine (AdoMet) from methionine and ATP. The overall synthetic reaction is composed of two sequential steps, AdoMet formation and the subsequent tripolyphosphate hydrolysis which occurs prior to release of AdoMet from the enzyme. The protein is S-adenosylmethionine synthase of Clostridium botulinum (strain Langeland / NCTC 10281 / Type F).